A 371-amino-acid polypeptide reads, in one-letter code: Probable RNA 3'-terminal phosphate cyclase-like protein (371 aa).

The protein belongs to the RNA 3'-terminal cyclase family. Type 2 subfamily. In terms of assembly, part of the small subunit (SSU) processome, composed of more than 70 proteins and the RNA chaperone small nucleolar RNA (snoRNA) U3.

Its subcellular location is the nucleus. The protein localises to the nucleolus. Part of the small subunit (SSU) processome, first precursor of the small eukaryotic ribosomal subunit. During the assembly of the SSU processome in the nucleolus, many ribosome biogenesis factors, an RNA chaperone and ribosomal proteins associate with the nascent pre-rRNA and work in concert to generate RNA folding, modifications, rearrangements and cleavage as well as targeted degradation of pre-ribosomal RNA by the RNA exosome. Does not have cyclase activity. This is Probable RNA 3'-terminal phosphate cyclase-like protein (rcl1) from Dictyostelium discoideum (Social amoeba).